The sequence spans 263 residues: Glutamate racemase (263 aa).

Substrate is bound by residues 13 to 14 (DS) and 45 to 46 (YG). The Proton donor/acceptor role is filled by Cys-77. 78 to 79 (NT) contacts substrate. The Proton donor/acceptor role is filled by Cys-185. Position 186-187 (186-187 (TH)) interacts with substrate.

The protein belongs to the aspartate/glutamate racemases family.

The catalysed reaction is L-glutamate = D-glutamate. It participates in cell wall biogenesis; peptidoglycan biosynthesis. Provides the (R)-glutamate required for cell wall biosynthesis. The polypeptide is Glutamate racemase (Vibrio vulnificus (strain YJ016)).